Reading from the N-terminus, the 1222-residue chain is Protein SCP160 (1222 aa).

The span at 1–12 (MSEEQTAIDSPP) shows a compositional bias: polar residues. Positions 1-59 (MSEEQTAIDSPPSTVEGSVETVTTIDSPSTTASTIAATAEEHPQLEKKPTPLPSLKDLP) are disordered. Residues 13 to 38 (STVEGSVETVTTIDSPSTTASTIAAT) show a composition bias toward low complexity. The segment covering 39–49 (AEEHPQLEKKP) has biased composition (basic and acidic residues). Threonine 50 is modified (phosphothreonine). A phosphoserine mark is found at serine 54, serine 63, serine 85, serine 87, and serine 89. Residues 79–98 (KPAVSNSPSPSPSAPSLTTG) form a disordered region. In terms of domain architecture, KH 1 spans 177 to 249 (PINAVIEVPS…ESVNLAKAKI (73 aa)). Serine 630 carries the phosphoserine modification. 5 consecutive KH domains span residues 634–702 (KSKM…KKYL), 712–771 (IITK…HEEL), 782–851 (GHKM…AKRV), 861–929 (FVTE…VEEI), and 939–1001 (SVTK…EKKI). Serine 1112 carries the post-translational modification Phosphoserine. Residues 1153–1216 (YAGYVWGADT…AGVEKAGEMV (64 aa)) form the KH 7 domain.

The protein resides in the endoplasmic reticulum membrane. It is found in the nucleus membrane. In terms of biological role, involved in the control of mitotic chromosome transmission. Required during cell division for faithful partitioning of the ER-nuclear envelope membranes which, in S.cerevisiae, enclose the duplicated chromosomes. This is Protein SCP160 (SCP160) from Saccharomyces cerevisiae (strain ATCC 204508 / S288c) (Baker's yeast).